The chain runs to 379 residues: Alanine racemase (379 aa).

K40 acts as the Proton acceptor; specific for D-alanine in catalysis. K40 is subject to N6-(pyridoxal phosphate)lysine. R138 is a substrate binding site. Y267 (proton acceptor; specific for L-alanine) is an active-site residue. Residue M315 participates in substrate binding.

This sequence belongs to the alanine racemase family. The cofactor is pyridoxal 5'-phosphate.

The enzyme catalyses L-alanine = D-alanine. It participates in amino-acid biosynthesis; D-alanine biosynthesis; D-alanine from L-alanine: step 1/1. Catalyzes the interconversion of L-alanine and D-alanine. May also act on other amino acids. The polypeptide is Alanine racemase (alr) (Halothermothrix orenii (strain H 168 / OCM 544 / DSM 9562)).